The primary structure comprises 880 residues: DNA mismatch repair protein MutS (880 aa).

631 to 638 (GPNMAGKS) provides a ligand contact to ATP. Residues 835 to 860 (RAAPPPPAPAAPKTSPVEERLREIQP) form a disordered region. The segment covering 850–860 (PVEERLREIQP) has biased composition (basic and acidic residues).

This sequence belongs to the DNA mismatch repair MutS family.

Its function is as follows. This protein is involved in the repair of mismatches in DNA. It is possible that it carries out the mismatch recognition step. This protein has a weak ATPase activity. This chain is DNA mismatch repair protein MutS, found in Cereibacter sphaeroides (strain ATCC 17029 / ATH 2.4.9) (Rhodobacter sphaeroides).